A 371-amino-acid chain; its full sequence is ETS-related transcription factor Elf-3 (371 aa).

A PNT domain is found at 46-132 (NPQMSLEGTE…AQLRDLTSSS (87 aa)). The short motif at 137–145 (SWIIELLEK) is the 9aaTAD element. The tract at residues 173–251 (GQQASPYHPG…HGKRKRGRPR (79 aa)) is disordered. Residues 181-216 (PGSCGAGAPSPGSSDVSTAGTGASRSSHSSDSGGSD) show a composition bias toward low complexity. Positions 231 to 241 (GFRDCKKGDPK) are enriched in basic and acidic residues. Positions 242–251 (HGKRKRGRPR) are enriched in basic residues. The segment at residues 273-355 (THLWEFIRDI…DGRRLVYKFG (83 aa)) is a DNA-binding region (ETS).

Belongs to the ETS family. As to quaternary structure, interacts with TBP. Interacts with CREBBP and EP300; these act as transcriptional coactivators of ELF3 and positively modulate its function. Interacts with XRCC5/KU86 and XRCC6/KU70; these inhibit the ability of ELF3 to bind DNA and negatively modulate its transcriptional activity. Associated with CLND7 and POU2F3. Interacts with ZNF768. As to expression, expressed exclusively in tissues containing a high content of terminally differentiated epithelial cells including mammary gland, colon, trachea, kidney, prostate, uterus, stomach and skin.

The protein localises to the cytoplasm. Its subcellular location is the nucleus. Transcriptional activator that binds and transactivates ETS sequences containing the consensus nucleotide core sequence GGA[AT]. Acts synergistically with POU2F3 to transactivate the SPRR2A promoter and with RUNX1 to transactivate the ANGPT1 promoter. Also transactivates collagenase, CCL20, CLND7, FLG, KRT8, NOS2, PTGS2, SPRR2B, TGFBR2 and TGM3 promoters. Represses KRT4 promoter activity. Involved in mediating vascular inflammation. May play an important role in epithelial cell differentiation and tumorigenesis. May be a critical downstream effector of the ERBB2 signaling pathway. May be associated with mammary gland development and involution. Plays an important role in the regulation of transcription with TATA-less promoters in preimplantation embryos, which is essential in preimplantation development. This chain is ETS-related transcription factor Elf-3, found in Homo sapiens (Human).